The primary structure comprises 216 residues: Somatotropin (216 aa).

An N-terminal signal peptide occupies residues 1 to 26; sequence MAAGPRTSVLLAFALLCLPWTQEVGA. Histidine 45 contributes to the Zn(2+) binding site. Cysteines 78 and 189 form a disulfide. Position 131 is a phosphoserine (serine 131). Glutamate 198 serves as a coordination point for Zn(2+). An intrachain disulfide couples cysteine 206 to cysteine 214.

Belongs to the somatotropin/prolactin family.

It is found in the secreted. Functionally, plays an important role in growth control. Its major role in stimulating body growth is to stimulate the liver and other tissues to secrete IGF1. It stimulates both the differentiation and proliferation of myoblasts. It also stimulates amino acid uptake and protein synthesis in muscle and other tissues. This Hippopotamus amphibius (Hippopotamus) protein is Somatotropin (GH1).